The chain runs to 804 residues: Putative mRNA-capping enzyme P5 (804 aa).

It belongs to the phytoreovirus protein P5 family.

The protein localises to the virion. It localises to the host cytoplasm. It catalyses the reaction a 5'-end diphospho-ribonucleoside in mRNA + GTP + H(+) = a 5'-end (5'-triphosphoguanosine)-ribonucleoside in mRNA + diphosphate. It functions in the pathway mRNA processing; mRNA capping. Enzyme involved in mRNA capping (Potential). Binds to GTP and might have guanylyltransferase activity. Together with the RNA-directed RNA polymerase P1 and protein P7, forms an transcriptional complex positioned near the channels situated at each of the five-fold vertices of the core. In Catharanthus roseus (Madagascar periwinkle), this protein is Putative mRNA-capping enzyme P5.